Consider the following 187-residue polypeptide: Glutathione-dependent formaldehyde-activating enzyme (187 aa).

A CENP-V/GFA domain is found at 20–167 (FAGGTLVCKC…LKELGLEPYD (148 aa)). The Zn(2+) site is built by cysteine 27, cysteine 29, cysteine 48, cysteine 50, cysteine 53, cysteine 95, and cysteine 98.

It belongs to the Gfa family. Zn(2+) serves as cofactor.

The enzyme catalyses S-(hydroxymethyl)glutathione = glutathione + formaldehyde. It participates in one-carbon metabolism; formaldehyde degradation; formate from formaldehyde (glutathione route): step 1/3. Catalyzes the condensation of formaldehyde and glutathione to S-hydroxymethylglutathione. The sequence is that of Glutathione-dependent formaldehyde-activating enzyme from Bradyrhizobium sp. (strain BTAi1 / ATCC BAA-1182).